Consider the following 900-residue polypeptide: Alpha-actinin-3 (900 aa).

Methionine 1 carries the post-translational modification N-acetylmethionine. A disordered region spans residues 1–26; that stretch reads MMMVMQPEGLGAGEGPFSGGGGGEYM. The segment at 1–260 is actin-binding; that stretch reads MMMVMQPEGL…IMTYVSCFYH (260 aa). Gly residues predominate over residues 10–24; sequence LGAGEGPFSGGGGGE. Calponin-homology (CH) domains lie at 44–148 and 157–263; these read KQQR…LRFA and TSAK…HAFA. 4 Spectrin repeats span residues 287 to 397, 407 to 512, 522 to 633, and 643 to 746; these read KLME…WLLS, HLAE…ALER, QLQL…TLQE, and RLRR…EVEN. EF-hand domains are found at residues 759–794 and 795–830; these read EQLN…MGYD and LGEV…ETAE. Residues aspartate 772, asparagine 776, methionine 778, aspartate 783, aspartate 808, and asparagine 810 each coordinate Ca(2+).

Belongs to the alpha-actinin family. As to quaternary structure, homodimer; antiparallel. Also forms heterodimers with ACTN2. Interacts with MYOZ1. Expression restricted to skeletal muscle fast (type 2) fibers (at protein level).

F-actin cross-linking protein which is thought to anchor actin to a variety of intracellular structures. This is a bundling protein. This chain is Alpha-actinin-3 (Actn3), found in Mus musculus (Mouse).